Here is a 106-residue protein sequence, read N- to C-terminus: Toxin-like structure LSTX-D9 (106 aa).

The first 20 residues, 1 to 20, serve as a signal peptide directing secretion; that stretch reads MMKVLVVVALLLTLIIYSSS. Positions 21-41 are excised as a propeptide; sequence DGIDDLEADELVSLMAHEQTR. Cystine bridges form between C45/C60, C52/C69, C59/C85, and C71/C83.

Belongs to the neurotoxin 19 (CSTX) family. 02 (D7) subfamily. Expressed by the venom gland.

The protein resides in the secreted. The protein is Toxin-like structure LSTX-D9 of Lycosa singoriensis (Wolf spider).